The following is a 1315-amino-acid chain: Claspin (1315 aa).

Disordered stretches follow at residues 22–276 and 345–474; these read EAAD…AARL and PADA…EQKT. 6 positions are modified to phosphoserine: serine 26, serine 42, serine 46, serine 53, serine 65, and serine 67. Residues 65 to 74 show a composition bias toward acidic residues; that stretch reads SDSEAEDRDD. Polar residues predominate over residues 91 to 101; the sequence is NLHSGKSQSRS. Acidic residues predominate over residues 108–118; that stretch reads DSDESDMEETP. 3 positions are modified to phosphoserine: serine 109, serine 112, and serine 119. Positions 119 to 128 are enriched in polar residues; sequence SQESPETQEA. 2 stretches are compositionally biased toward basic and acidic residues: residues 153-178 and 186-197; these read LLRE…MEKI and TRCEESDADRPL. Residues 159-187 are a coiled coil; sequence EGKAKSKRRLEKEERTMEKIRRLKKKETR. Acidic residues predominate over residues 205–228; it reads EDSDLFETGLEEENDSALEDEESL. Serine 220 is subject to Phosphoserine. Over residues 235 to 245 the composition is skewed to basic residues; that stretch reads VKNKVKNRKKK. Serine 255 bears the Phosphoserine mark. Basic and acidic residues-rich tracts occupy residues 391-415 and 455-470; these read ACGK…DDRP and EELK…EGMP. Residue serine 522 is modified to Phosphoserine. A coiled-coil region spans residues 599–626; sequence EKLQMLKAKLQEAMKLRRLEERQKRQAL. The tract at residues 625-691 is disordered; it reads ALFKLDNEDG…SSDIGKSVAL (67 aa). The span at 632–657 shows a compositional bias: acidic residues; it reads EDGFEEEEEEEEMTDESEEDGEEETT. Residues 669 to 679 are compositionally biased toward basic and acidic residues; the sequence is KDEKETDKENT. Phosphoserine occurs at positions 698, 701, 709, 722, and 740. Residues 713-750 are disordered; that stretch reads MGYFPTEEKSETDEYLAKQSDKLDEDDSSSLLTKESSH. Positions 741 to 750 are enriched in low complexity; sequence SSLLTKESSH. 5 positions are modified to phosphoserine: serine 785, serine 787, serine 810, serine 816, and serine 823. Lysine 868 is subject to N6-acetyllysine. CKB motif repeat units follow at residues 887 to 896 and 917 to 926; these read ELLDLCTGQF and ELLNLCSGKF. Threonine 893 carries the phosphothreonine; by CHEK1 modification. Disordered stretches follow at residues 924–1002 and 1032–1052; these read GKFP…NDEE and EDEA…DGEE. Serine 932 is subject to Phosphoserine. A CKB motif 3 repeat occupies 954-963; it reads EALALCSGSF. Positions 966–1063 are acidic patch; that stretch reads DREEEGEEEE…DEYEEDVIDE (98 aa). 3 stretches are compositionally biased toward acidic residues: residues 967–977, 990–1002, and 1043–1052; these read REEEGEEEEFG, SDED…NDEE, and GSEDEYDGEE. Phosphoserine occurs at positions 990, 996, and 998. A coiled-coil region spans residues 1001–1036; that stretch reads EELALDLEDDEEELLKQSEKMKRQMRLKKYLEDEAE. 2 positions are modified to phosphoserine: serine 1133 and serine 1265. The tract at residues 1264-1315 is disordered; it reads LSPTKAEAAKDSSKPQVRRRGLSSMMSPSPKRLKTNGSSPGPKRSIFRYLES.

Belongs to the claspin family. As to quaternary structure, interacts (phosphorylation-dependent) with CHEK1; regulates CLSPN function in checkpoint for DNA damage and replication. Interacts with ATR and RAD9A and these interactions are slightly reduced during checkpoint activation. Interacts with BRCA1 and this interaction increases during checkpoint activation. Interacts with TIMELESS; the interaction is required for leading-strand replication. Associates with the MCM2-7 complex and other replisome factors. Interacts (via the acidic patch) with CDC7; the interaction is required for phosphorylation of MCM proteins and CLASPIN by CDC7. Interacts with PCNA. Interacts with FZR1. Post-translationally, phosphorylated. Undergoes ATR-dependent phosphorylation by CHEK1 during activation of DNA replication or damage checkpoints. Phosphorylation by CSNK1G1/CK1 promotes CHEK1 binding. Phosphorylated by CDC7 during DNA replication, phosphorylation inhibits interaction between the acidic patch and N-terminal segments leading to increased binding to DNA and PCNA. Ubiquitinated by the anaphase promoting complex/cyclosome (APC/C) during G1 phase, leading to its degradation by the proteasome. Ubiquitination is mediated via its interaction with FZR1/CDH1. Following DNA damage, it is deubiquitinated by USP28 in G2 phase, preventing its degradation. In terms of processing, proteolytically cleaved by caspase-7 (CASP7) in response to apoptosis, leading to its inactivation.

It is found in the nucleus. Required for checkpoint mediated cell cycle arrest in response to inhibition of DNA replication or to DNA damage induced by both ionizing and UV irradiation. Adapter protein which binds to BRCA1 and the checkpoint kinase CHEK1 and facilitates the ATR-dependent phosphorylation of both proteins. Also required to maintain normal rates of replication fork progression during unperturbed DNA replication. Binds directly to DNA, with particular affinity for branched or forked molecules and interacts with multiple protein components of the replisome such as the MCM2-7 complex and TIMELESS. Important for initiation of DNA replication, recruits kinase CDC7 to phosphorylate MCM2-7 components. This is Claspin (Clspn) from Mus musculus (Mouse).